Here is a 131-residue protein sequence, read N- to C-terminus: RxLR effector protein 62 (131 aa).

Residues 1–19 form the signal peptide; it reads MRLDILLFTLSSSTSLALS. The RxLR-dEER signature appears at 49-60; the sequence is RHLREEPANEAR. The N-linked (GlcNAc...) asparagine glycan is linked to Asn61.

It belongs to the RxLR effector family.

Its subcellular location is the secreted. It is found in the host cell. Its function is as follows. Secreted effector that suppresses callose deposition, a hallmark of pathogen-associated molecular pattern (PAMP)-triggered immunity (PTI) and renders host plants more susceptible to bacterial infection. Reduces host plant responsiveness to salicylic acid (SA) in haustoriated cells into which host-translocated effectors are delivered. The chain is RxLR effector protein 62 from Hyaloperonospora arabidopsidis (strain Emoy2) (Downy mildew agent).